The following is a 440-amino-acid chain: UDP-N-acetylmuramoylalanine--D-glutamate ligase (440 aa).

ATP is bound at residue 115–121 (GSNGKST).

It belongs to the MurCDEF family.

It is found in the cytoplasm. It carries out the reaction UDP-N-acetyl-alpha-D-muramoyl-L-alanine + D-glutamate + ATP = UDP-N-acetyl-alpha-D-muramoyl-L-alanyl-D-glutamate + ADP + phosphate + H(+). Its pathway is cell wall biogenesis; peptidoglycan biosynthesis. Cell wall formation. Catalyzes the addition of glutamate to the nucleotide precursor UDP-N-acetylmuramoyl-L-alanine (UMA). This Aliivibrio fischeri (strain MJ11) (Vibrio fischeri) protein is UDP-N-acetylmuramoylalanine--D-glutamate ligase.